The following is a 449-amino-acid chain: Guanine nucleotide-binding protein alpha-2 subunit (449 aa).

Positions 1–91 (MGLCASSEKN…TATANTSGSQ (91 aa)) are disordered. Gly-2 is lipidated: N-myristoyl glycine. Residue Cys-4 is the site of S-palmitoyl cysteine attachment. Composition is skewed to polar residues over residues 7-23 (SEKN…SAGS) and 38-48 (QKTVRTVNTAN). Low complexity predominate over residues 49–59 (QQEKQQQRQQQ). Residues 72–91 (NGSINNAISPTATANTSGSQ) show a composition bias toward polar residues. A G-alpha domain is found at 122–448 (KELKVLLLGA…ENTLKDSGVL (327 aa)). Residues 125–138 (KVLLLGAGESGKST) form a G1 motif region. Positions 133, 134, 135, 136, 137, 138, 245, 270, 276, 299, 365, 366, 368, and 420 each coordinate GTP. Ser-137 provides a ligand contact to Mg(2+). A G2 motif region spans residues 268–276 (DILRSRQMT). Position 276 (Thr-276) interacts with Mg(2+). The interval 292–301 (MHIYDVGGQR) is G3 motif. Positions 361 to 368 (VLFLNKID) are G4 motif. A G5 motif region spans residues 418–423 (TQATDT).

The protein belongs to the G-alpha family. G(q) subfamily. In terms of assembly, g proteins are composed of 3 units; alpha, beta and gamma. The alpha chain contains the guanine nucleotide binding site. GPA2 interacts with the kelch repeat beta-mimic proteins GPB1 and GPB2 and with the gamma subunit GPG1. Interacts with the G protein coupled receptor GPR1. Also interacts with regulators of G protein signaling (RGS) protein RGS2. Requires Mg(2+) as cofactor. Myristoylation at Gly-2 and palmitoylation at Cys-4 are required for membrane localization and function of the protein.

It is found in the cell membrane. Its activity is regulated as follows. Alternates between an inactive form bound to GDP and an active form bound to GTP. Activated by the G protein coupled receptor (GPCR) GPR1, which serves as a guanine nucleotide-exchange factor (GEF), and inactivated by RGS2, acting as a GTPase-activating protein (GAP) for GPA2. Alpha subunit of the heterotrimeric guanine nucleotide-binding protein (G protein) involved in glucose-induced cAMP signaling. Binds to its cognate transmembrane receptor GPR1, which senses extracellular carbon sources, and activates cAMP-PKA signaling and governs diploid pseudohyphal differentiation and haploid invasive growth. The G protein beta-mimic proteins GPB1 and GPB2 inhibit GPA2-GPR1 coupling, probably to reduce signaling in the absence of glucose. The protein is Guanine nucleotide-binding protein alpha-2 subunit (GPA2) of Saccharomyces cerevisiae (strain ATCC 204508 / S288c) (Baker's yeast).